We begin with the raw amino-acid sequence, 59 residues long: Temperature acclimation protein A (59 aa).

The region spanning 1–55 (FNDEKGFGFITPESGPDLFVHFRAIQGNGFKSLKEGQKVTFIAVQGQKGMQADKV) is the CSD domain.

The protein resides in the cytoplasm. In terms of biological role, affects cell viability at low temperatures. This chain is Temperature acclimation protein A (tapA), found in Pseudomonas fragi.